The chain runs to 331 residues: Probable 5-dehydro-4-deoxyglucarate dehydratase 2 (331 aa).

The segment at Met-1–Thr-23 is disordered. Residues Asp-10–Thr-23 are compositionally biased toward low complexity.

Belongs to the DapA family.

It catalyses the reaction 5-dehydro-4-deoxy-D-glucarate + H(+) = 2,5-dioxopentanoate + CO2 + H2O. Its pathway is carbohydrate acid metabolism; D-glucarate degradation; 2,5-dioxopentanoate from D-glucarate: step 2/2. In Streptomyces avermitilis (strain ATCC 31267 / DSM 46492 / JCM 5070 / NBRC 14893 / NCIMB 12804 / NRRL 8165 / MA-4680), this protein is Probable 5-dehydro-4-deoxyglucarate dehydratase 2.